Consider the following 268-residue polypeptide: 5'-nucleotidase SurE (268 aa).

Positions 24, 25, 55, and 111 each coordinate a divalent metal cation.

This sequence belongs to the SurE nucleotidase family. A divalent metal cation serves as cofactor.

Its subcellular location is the cytoplasm. It catalyses the reaction a ribonucleoside 5'-phosphate + H2O = a ribonucleoside + phosphate. In terms of biological role, nucleotidase that shows phosphatase activity on nucleoside 5'-monophosphates. The protein is 5'-nucleotidase SurE of Deinococcus radiodurans (strain ATCC 13939 / DSM 20539 / JCM 16871 / CCUG 27074 / LMG 4051 / NBRC 15346 / NCIMB 9279 / VKM B-1422 / R1).